The primary structure comprises 733 residues: Polyribonucleotide nucleotidyltransferase (733 aa).

Residues D503 and D509 each contribute to the Mg(2+) site. Residues 570–629 (PRLTTIQIPVDAIGMVIGKGGETIRSITEETGAEINIDDDGTVTIACSSPEATKAAVETI) enclose the KH domain. Positions 639 to 713 (GTIYMGKVRD…GKTKFALSIK (75 aa)) constitute an S1 motif domain.

It belongs to the polyribonucleotide nucleotidyltransferase family. It depends on Mg(2+) as a cofactor.

The protein resides in the cytoplasm. It carries out the reaction RNA(n+1) + phosphate = RNA(n) + a ribonucleoside 5'-diphosphate. Involved in mRNA degradation. Catalyzes the phosphorolysis of single-stranded polyribonucleotides processively in the 3'- to 5'-direction. The chain is Polyribonucleotide nucleotidyltransferase from Chlorobaculum tepidum (strain ATCC 49652 / DSM 12025 / NBRC 103806 / TLS) (Chlorobium tepidum).